We begin with the raw amino-acid sequence, 70 residues long: Large ribosomal subunit protein bL31 (70 aa).

Zn(2+)-binding residues include C16, C18, C37, and C40. Positions 48–70 (QRQASSGGRVDKFNKRFGALGSK) are disordered.

This sequence belongs to the bacterial ribosomal protein bL31 family. Type A subfamily. As to quaternary structure, part of the 50S ribosomal subunit. Zn(2+) serves as cofactor.

Its function is as follows. Binds the 23S rRNA. The protein is Large ribosomal subunit protein bL31 of Photobacterium profundum (strain SS9).